Reading from the N-terminus, the 146-residue chain is Hemoglobin subunit beta-2 (146 aa).

In terms of domain architecture, Globin spans 2-146; that stretch reads EWTDFERATI…VVSSLGRQYH (145 aa). Residues His-63 and His-92 each coordinate heme b.

This sequence belongs to the globin family. In terms of assembly, hb2 is a heterotetramer of two alpha chains and two beta-2 chains. As to expression, red blood cells.

In terms of biological role, involved in oxygen transport from gills to the various peripheral tissues. The sequence is that of Hemoglobin subunit beta-2 (hbb2) from Pseudaphritis urvillii (Congolli).